The following is a 194-amino-acid chain: dCTP deaminase (194 aa).

DCTP-binding positions include 110-115 (RSSLAR), aspartate 128, 136-138 (VLE), tyrosine 171, lysine 178, and glutamine 182. The active-site Proton donor/acceptor is glutamate 138. Residues 173–194 (SRQDAKYKNQQSAVASRINQDR) form a disordered region. The segment covering 180 to 194 (KNQQSAVASRINQDR) has biased composition (polar residues).

This sequence belongs to the dCTP deaminase family. In terms of assembly, homotrimer.

The catalysed reaction is dCTP + H2O + H(+) = dUTP + NH4(+). The protein operates within pyrimidine metabolism; dUMP biosynthesis; dUMP from dCTP (dUTP route): step 1/2. Its function is as follows. Catalyzes the deamination of dCTP to dUTP. In Actinobacillus succinogenes (strain ATCC 55618 / DSM 22257 / CCUG 43843 / 130Z), this protein is dCTP deaminase.